The following is a 63-amino-acid chain: Large ribosomal subunit protein uL29 (63 aa).

It belongs to the universal ribosomal protein uL29 family.

The sequence is that of Large ribosomal subunit protein uL29 from Tolumonas auensis (strain DSM 9187 / NBRC 110442 / TA 4).